Reading from the N-terminus, the 335-residue chain is Putative T-box protein 7 (335 aa).

The segment at residues Leu73–Asn246 is a DNA-binding region (T-box).

Its subcellular location is the nucleus. The protein is Putative T-box protein 7 of Caenorhabditis elegans.